The primary structure comprises 204 residues: Recombination protein RecR (204 aa).

Residues 58–75 (CSVCQNVTDREEDPCSIC) form a C4-type zinc finger. The 99-residue stretch at 83–181 (TVICVVESPV…EVTKIARGIP (99 aa)) folds into the Toprim domain.

The protein belongs to the RecR family.

May play a role in DNA repair. It seems to be involved in an RecBC-independent recombinational process of DNA repair. It may act with RecF and RecO. This Chlorobium luteolum (strain DSM 273 / BCRC 81028 / 2530) (Pelodictyon luteolum) protein is Recombination protein RecR.